Here is a 791-residue protein sequence, read N- to C-terminus: MLMATPTSRASLNLLRRSPKPKYFSSSSCHFRPSTFRKSYPCPIWSSSFSFCLPPPRSTTSTSLSSSSFRPFSSPPSMSSAAAAAVESVVSDETLSSNPLLQDFDFPPFDSVDASHVRPGIRALLQHLEAELEELEKSVEPTWPKLVEPLEKIVDRLTVVWGMINHLKAVKDTPELRAAIEDVQPEKVKFQLRLGQSKPIYNAFKAIRESPDWSSLSEARQRLVEAQIKEAVLIGIALDDEKREEFNKIEQELEKLSHKFSENVLDATKKFEKLITDKKEIEGLPPSALGLFAQAAVSKGHENATAENGPWIITLDAPSYLPVMQHAKNRALREEVYRAYLSRASSGDLDNTAIIDQILKLRLEKAKLLGYNNYAEVSMAMKMATVEKAAELLEKLRSASWDAAVQDMEDLKSFAKNQGAAESDSMTHWDTTFWSERLRESKYDINEEELRPYFSLPKVMDGLFSLAKTLFGIDIEPADGLAPVWNNDVRFYRVKDSSGNPIAYFYFDPYSRPSEKRGGAWMDEVVSRSRVMAQKGSSVRLPVAHMVCNQTPPVGDKPSLMTFREVETVFHEFGHALQHMLTKQDEGLVAGIRNIEWDAVELPSQFMENWCYHRDTLMSIAKHYETGETLPEEVYKKLLAARTFRAGSFSLRQLKFASVDLELHTKYVPGGPESIYDVDQRVSVKTQVIPPLPEDRFLCSFSHIFAGGYAAGYYSYKWAEVLSADAFSAFEDAGLDDIKAVKETGQRFRNTILALGGGKAPLKVFVEFRGREPSPEPLLRHNGLLAASASA.

A chloroplast and mitochondrion-targeting transit peptide spans 1-82 (MLMATPTSRA…SSPPSMSSAA (82 aa)). 2 coiled-coil regions span residues 118 to 138 (RPGIRALLQHLEAELEELEKS) and 239 to 259 (DDEKREEFNKIEQELEKLSHK). Histidine 571 contributes to the Zn(2+) binding site. Glutamate 572 is an active-site residue. 2 residues coordinate Zn(2+): histidine 575 and glutamate 601. Residue 703 to 709 (HIFAGGY) participates in substrate binding.

It belongs to the peptidase M3 family. The cofactor is Zn(2+).

Its subcellular location is the mitochondrion matrix. The protein resides in the plastid. It is found in the chloroplast stroma. The catalysed reaction is Hydrolysis of oligopeptides, with broad specificity. Gly or Ala commonly occur as P1 or P1' residues, but more distant residues are also important, as is shown by the fact that Z-Gly-Pro-Gly-|-Gly-Pro-Ala is cleaved, but not Z-(Gly)(5).. Inhibited by salicylic acid. In terms of biological role, oligopeptidase degrading short peptides from 8 to 23 amino acid residues. Plays a role in the degradation of transit peptides and of peptides derived from other proteolytic events. Does not exhibit a strict cleavage pattern. Binds salicylic acid. This is Organellar oligopeptidase A, chloroplastic/mitochondrial from Arabidopsis thaliana (Mouse-ear cress).